A 951-amino-acid polypeptide reads, in one-letter code: Serine/threonine-protein phosphatase 4 regulatory subunit 1 (951 aa).

7 HEAT repeats span residues 26–63, 82–119, 127–164, 168–206, 208–246, 248–285, and 287–324; these read ESDVIIIPSALDFVSQDEMLTPLGRLDKYAASENVFNR, RDCIAVLERISRLADDSEPTVRAELMEQVPHIALFCQE, AFSKYLLPIVVRYLADQNNQVRKTSQAALLALLEQELI, DVETKVCPVLIDLTAPDSNDDVKTEAVAIMCKMAPMVGK, ITERLILPRFCEMCCDCRMFHVRKVCAANFGDICSVVGQ, ATEEMLLPRFFQLCSDNVWGVRKACAECFMAVSCATCQ, and IRRTKLSALFINLISDPSRWVRQAAFQSLGPFISTFAN. Disordered regions lie at residues 326 to 395, 407 to 501, 539 to 569, and 592 to 612; these read SSSG…DMRV, SESP…MATR, HDEAGGAEQRSELQDDAVGAGGELPNCSISE, and GGADVGPGGGGGFSPDEERRP. 3 stretches are compositionally biased toward basic and acidic residues: residues 332 to 360, 464 to 483, and 539 to 551; these read FKDESKSSEDKDRIRDDGVVQEEQSRPED, DLDKELQQDPGERPSPERTG, and HDEAGGAEQRSEL. The HEAT 8 repeat unit spans residues 502–539; the sequence is KELEEMIENLEPHMDDPDVKAQVEVLSAALRASTLDAH. Positions 594–604 are enriched in gly residues; it reads ADVGPGGGGGF. HEAT repeat units follow at residues 699-735, 777-815, 820-858, and 862-899; these read LTAADLVPIFNGFLKDLDEVRIGVLKHLHDFLKLLHI, RDVYDYLRPIALNLCADKVSSVRWISYKLVSEMVKKLHM, TFGVELINELVENFGRCPKWSGRQAFVFVCQTVIEDDCL, and QFAVHLMPHLLTLANDRVPNVRVLLAKTLRQTLLEKEY. Ser-936 carries the phosphoserine modification.

In terms of assembly, serine/threonine-protein phosphatase 4 (PP4) occurs in different assemblies of the catalytic and one or more regulatory subunits. Component of the PP4 complex PPP4C-PPP4R1. Interacts with HDAC3.

Functionally, regulatory subunit of serine/threonine-protein phosphatase 4. May play a role in regulation of cell division in renal glomeruli. The PPP4C-PPP4R1 PP4 complex may play a role in dephosphorylation and regulation of HDAC3. Plays a role in the inhibition of TNF-induced NF-kappa-B activation by regulating the dephosphorylation of TRAF2. This chain is Serine/threonine-protein phosphatase 4 regulatory subunit 1 (Ppp4r1), found in Rattus norvegicus (Rat).